The primary structure comprises 237 residues: UPF0173 metal-dependent hydrolase HQ_3368A (237 aa).

The protein belongs to the UPF0173 family.

The chain is UPF0173 metal-dependent hydrolase HQ_3368A from Haloquadratum walsbyi (strain DSM 16790 / HBSQ001).